Consider the following 297-residue polypeptide: Averufin oxidase stcO (297 aa).

Residues 277 to 297 (VVVLGVCILLLLGGLLYSIKA) traverse the membrane as a helical segment.

Belongs to the avfA family.

It is found in the membrane. The protein operates within mycotoxin biosynthesis; sterigmatocystin biosynthesis. In terms of biological role, averufin oxidase; part of the gene cluster that mediates the biosynthesis of sterigmatocystin (ST), a polyketide-derived furanocoumarin which is part of the most toxic and carcinogenic compounds among the known mycotoxins. The first step in the biosynthesis of sterigmatocystin is the production of hexanoate by the fatty acid synthase (FAS) units stcJ and stcK. The polyketide backbone is assembled by the non-reducing polyketide synthase stcA by condensation of the starter hexanoyl-CoA and 7 malonyl-CoA extender units followed by cyclization and release of norsolorinic acid. Norsolorinic acid is the first stable intermediate in the biosynthesis of sterigmatocystin and is converted into averantin (AVN) by the ketoreductase stcE which reduces the hexanoate ketone to an alcohol. Averantin is then oxidized into 5'-hydroxyaverantin (HAVN) by the cytochrome P450 monooxygenase stcF. 5'-hydroxyaverantin is further converted to 5'-oxyaverantin (OAVN) by the 5'-hydroxyaverantin dehydrogenase stcG. The next step is the conversion of OAVN into averufin (AVF) which is catalyzed by a yet to be identified enzyme. The cytochrome P450 monooxygenase stcB and the flavin-binding monooxygenase stcW are both required for the conversion of averufin to 1-hydroxyversicolorone. The esterase stcI probably catalyzes the formation of versiconal hemiacetal acetate from 1-hydroxyversicolorone. The oxydoreductase stcN then probably catalyzes the biosynthetic step from versiconal to versicolorin B (VERB). The next step is performed by the versicolorin B desaturase stcL to produce versicolorin A (VERA). The ketoreductase stcU and the cytochrome P450 monooxygenase stcS are involved in the conversion of versicolorin A to demethylsterigmatocystin. The Baeyer-Villiger oxidas stcQ and the reductase stcR might be involved in the biosynthetic step from versicolorin A to demethylsterigmatocystin. The final step in the biosynthesis of sterigmatocystin is the methylation of demethylsterigmatocystin catalyzed by the methyltransferase stcP. This Emericella nidulans (strain FGSC A4 / ATCC 38163 / CBS 112.46 / NRRL 194 / M139) (Aspergillus nidulans) protein is Averufin oxidase stcO.